Consider the following 325-residue polypeptide: NADH-cytochrome b5 reductase 2 (325 aa).

Residues 32-48 form a helical membrane-spanning segment; sequence VPLYGGLALAAGGAYYY. Residues 74 to 179 enclose the FAD-binding FR-type domain; the sequence is QGWVDLKLAG…KGPIPKYPWE (106 aa). Residue 182–217 coordinates FAD; sequence KHDHICMIAGGTGITPMYQIIRKIFNNPNDKTKVTL.

The protein belongs to the flavoprotein pyridine nucleotide cytochrome reductase family. FAD serves as cofactor.

The protein localises to the mitochondrion outer membrane. It carries out the reaction 2 Fe(III)-[cytochrome b5] + NADH = 2 Fe(II)-[cytochrome b5] + NAD(+) + H(+). In terms of biological role, may mediate the reduction of outer membrane cytochrome b5. In Coccidioides immitis (strain RS) (Valley fever fungus), this protein is NADH-cytochrome b5 reductase 2 (MCR1).